The chain runs to 362 residues: Chorismate synthase (362 aa).

The NADP(+) site is built by arginine 48 and arginine 54. FMN is bound by residues 125-127 (RSS), 238-239 (NA), glycine 286, 301-305 (KPTSS), and arginine 327.

This sequence belongs to the chorismate synthase family. As to quaternary structure, homotetramer. The cofactor is FMNH2.

The enzyme catalyses 5-O-(1-carboxyvinyl)-3-phosphoshikimate = chorismate + phosphate. Its pathway is metabolic intermediate biosynthesis; chorismate biosynthesis; chorismate from D-erythrose 4-phosphate and phosphoenolpyruvate: step 7/7. Catalyzes the anti-1,4-elimination of the C-3 phosphate and the C-6 proR hydrogen from 5-enolpyruvylshikimate-3-phosphate (EPSP) to yield chorismate, which is the branch point compound that serves as the starting substrate for the three terminal pathways of aromatic amino acid biosynthesis. This reaction introduces a second double bond into the aromatic ring system. The sequence is that of Chorismate synthase from Granulibacter bethesdensis (strain ATCC BAA-1260 / CGDNIH1).